A 267-amino-acid chain; its full sequence is 3-isopropylmalate dehydratase large subunit (267 aa).

[4Fe-4S] cluster-binding residues include Cys-146, Cys-206, and Cys-209.

Belongs to the aconitase/IPM isomerase family. LeuC type 1 subfamily. As to quaternary structure, heterodimer of LeuC and LeuD. Requires [4Fe-4S] cluster as cofactor.

It catalyses the reaction (2R,3S)-3-isopropylmalate = (2S)-2-isopropylmalate. It functions in the pathway amino-acid biosynthesis; L-leucine biosynthesis; L-leucine from 3-methyl-2-oxobutanoate: step 2/4. In terms of biological role, catalyzes the isomerization between 2-isopropylmalate and 3-isopropylmalate, via the formation of 2-isopropylmaleate. In Cupriavidus necator (Alcaligenes eutrophus), this protein is 3-isopropylmalate dehydratase large subunit (leuC).